The chain runs to 238 residues: 1-(5-phosphoribosyl)-5-[(5-phosphoribosylamino)methylideneamino] imidazole-4-carboxamide isomerase (238 aa).

Asp-8 serves as the catalytic Proton acceptor. The active-site Proton donor is Asp-129.

The protein belongs to the HisA/HisF family.

The protein localises to the cytoplasm. The catalysed reaction is 1-(5-phospho-beta-D-ribosyl)-5-[(5-phospho-beta-D-ribosylamino)methylideneamino]imidazole-4-carboxamide = 5-[(5-phospho-1-deoxy-D-ribulos-1-ylimino)methylamino]-1-(5-phospho-beta-D-ribosyl)imidazole-4-carboxamide. It participates in amino-acid biosynthesis; L-histidine biosynthesis; L-histidine from 5-phospho-alpha-D-ribose 1-diphosphate: step 4/9. The polypeptide is 1-(5-phosphoribosyl)-5-[(5-phosphoribosylamino)methylideneamino] imidazole-4-carboxamide isomerase (Anaeromyxobacter dehalogenans (strain 2CP-C)).